The chain runs to 76 residues: Putative cation transport regulator ChaB (76 aa).

This sequence belongs to the ChaB family. Monomer.

In terms of biological role, might be a regulator of the sodium-potassium/proton antiporter ChaA. This is Putative cation transport regulator ChaB from Escherichia coli O157:H7.